Consider the following 260-residue polypeptide: MATAPSPREENVYLAKLAEQAERYEEMVEFMEKVCAAADSEELTVEERNLLSVAYKNVIGARRASWRIISSIEQKEESRGNDDHVSTIRDYRSKIETELSNICGGILKLLDSRLIPSAASGDSKVFYLKMKGDYHRYLAEFKTGAERKEAAESTLSAYKAAQDIANAELAPTHPIRLGLALNFSVFYYEILNSPDRACNLANEAFDEAIAELDTLEEESYKDSTLIMQLLRDNLTLWTSDMQDDGGDEIKEAAPKPDEQY.

The interval aspartate 240–tyrosine 260 is disordered. The segment covering aspartate 247 to tyrosine 260 has biased composition (basic and acidic residues).

It belongs to the 14-3-3 family.

This chain is 14-3-3-like protein, found in Oenothera elata subsp. hookeri (Hooker's evening primrose).